The primary structure comprises 210 residues: Large ribosomal subunit protein uL3 (210 aa).

The segment at 122–155 (NQKRNNFGRGPMSHGSKNHRAPGSIGAGTTPGRV) is disordered.

Belongs to the universal ribosomal protein uL3 family. In terms of assembly, part of the 50S ribosomal subunit. Forms a cluster with proteins L14 and L19.

In terms of biological role, one of the primary rRNA binding proteins, it binds directly near the 3'-end of the 23S rRNA, where it nucleates assembly of the 50S subunit. This is Large ribosomal subunit protein uL3 from Nostoc punctiforme (strain ATCC 29133 / PCC 73102).